The sequence spans 114 residues: uncharacterized protein (114 aa).

May be associated with transposition functions of transposon Tn903. This is an uncharacterized protein from Escherichia coli.